The primary structure comprises 543 residues: CTP synthase (543 aa).

The segment at 1 to 265 (MTRFVFITGG…DTEVLRHFGL (265 aa)) is amidoligase domain. Ser-13 contributes to the CTP binding site. Ser-13 is a UTP binding site. 14–19 (SLGKGI) provides a ligand contact to ATP. Residue Tyr-54 participates in L-glutamine binding. Position 71 (Asp-71) interacts with ATP. Residues Asp-71 and Glu-139 each contribute to the Mg(2+) site. Residues 146–148 (DIE), 186–191 (KTKPTQ), and Lys-222 each bind CTP. Residues 186–191 (KTKPTQ) and Lys-222 contribute to the UTP site. A Glutamine amidotransferase type-1 domain is found at 291–542 (RIAVVGKYTA…VGAAVKKMRL (252 aa)). Gly-354 lines the L-glutamine pocket. Cys-381 functions as the Nucleophile; for glutamine hydrolysis in the catalytic mechanism. L-glutamine is bound by residues 382–385 (FGMQ), Glu-405, and Arg-470. Active-site residues include His-515 and Glu-517.

It belongs to the CTP synthase family. In terms of assembly, homotetramer.

The catalysed reaction is UTP + L-glutamine + ATP + H2O = CTP + L-glutamate + ADP + phosphate + 2 H(+). It catalyses the reaction L-glutamine + H2O = L-glutamate + NH4(+). The enzyme catalyses UTP + NH4(+) + ATP = CTP + ADP + phosphate + 2 H(+). The protein operates within pyrimidine metabolism; CTP biosynthesis via de novo pathway; CTP from UDP: step 2/2. With respect to regulation, allosterically activated by GTP, when glutamine is the substrate; GTP has no effect on the reaction when ammonia is the substrate. The allosteric effector GTP functions by stabilizing the protein conformation that binds the tetrahedral intermediate(s) formed during glutamine hydrolysis. Inhibited by the product CTP, via allosteric rather than competitive inhibition. Catalyzes the ATP-dependent amination of UTP to CTP with either L-glutamine or ammonia as the source of nitrogen. Regulates intracellular CTP levels through interactions with the four ribonucleotide triphosphates. In Gluconacetobacter diazotrophicus (strain ATCC 49037 / DSM 5601 / CCUG 37298 / CIP 103539 / LMG 7603 / PAl5), this protein is CTP synthase.